A 341-amino-acid polypeptide reads, in one-letter code: Protein P3 (341 aa).

The tract at residues 46-175 is disordered; it reads RARQAANPVS…QTKNAPDANE (130 aa). Residues 97-116 are compositionally biased toward basic residues; that stretch reads KSKRAVRREKRRTAAKKATN. Residues 142–152 show a composition bias toward low complexity; that stretch reads SYLSSLLSSPS.

This sequence belongs to the nepovirus protein P3 family.

This Vitis rupestris (Grape) protein is Protein P3.